A 348-amino-acid polypeptide reads, in one-letter code: MIDNNCLYKEELNRNSYSGLAKEASESILLPSESGFDGSRSPVCSSPDPNLNYRPVIGILSHPGDGASGRLTNDTSSTYIAASYVKFAEAGGARVIPLIYNEPEEVLFQKLELVNGVIFTGGWAKKYDYFEIVKKIFTKALERNDAGEHFPVYGICLGFELMSIIISQNRDILERFDAEDNASSLQFVDNVNNDGTLFQRFPPELLKKLSTDCLVMQKHKYGITPANFQANPALSSFFEILTTCIDENSKTYVSTVKAKRYPITGFQWHPEKNAFEWGSSAIPHSEDAIQVTQHAASYLVSEARKSLNRPESQKVLSNLIYNYKPTYCGYAGRGYDEVYIFTQPRSRF.

Residues 1–23 (MIDNNCLYKEELNRNSYSGLAKE) form the signal peptide. A Gamma-glutamyl hydrolase domain is found at 46-342 (SPDPNLNYRP…RGYDEVYIFT (297 aa)). Cysteine 156 serves as the catalytic Nucleophile. Residue histidine 269 is part of the active site.

It belongs to the peptidase C26 family. As to expression, highly expressed in roots and at lower levels in leaves, stems and siliques.

It is found in the vacuole. It localises to the secreted. The protein localises to the extracellular space. Its subcellular location is the cell wall. The catalysed reaction is (6S)-5,6,7,8-tetrahydrofolyl-(gamma-L-Glu)(n) + (n-1) H2O = (6S)-5,6,7,8-tetrahydrofolate + (n-1) L-glutamate. Its function is as follows. Cleaves the polyglutamate sidechains of folate polyglutamates in the vacuole. Is important for polyglutamyl tail length determination before vacuolar exit. Plays a role in folate stability and intracellular folate content. This Arabidopsis thaliana (Mouse-ear cress) protein is Gamma-glutamyl hydrolase 1 (GGH1).